We begin with the raw amino-acid sequence, 133 residues long: Probable non-specific lipid-transfer protein 2 (133 aa).

The N-terminal stretch at 1–31 (MRTVSMAALVVIAAALAWTSSAEPAPAPAPG) is a signal peptide. 4 disulfides stabilise this stretch: Cys-35–Cys-83, Cys-45–Cys-60, Cys-61–Cys-106, and Cys-81–Cys-121.

The protein belongs to the plant LTP family.

In terms of biological role, plant non-specific lipid-transfer proteins transfer phospholipids as well as galactolipids across membranes. May play a role in wax or cutin deposition in the cell walls of expanding epidermal cells and certain secretory tissues. In Parietaria judaica (Pellitory-of-the-wall), this protein is Probable non-specific lipid-transfer protein 2.